Here is a 472-residue protein sequence, read N- to C-terminus: NADH-quinone oxidoreductase subunit N 2 (472 aa).

The next 13 helical transmembrane spans lie at 3-23, 34-54, 67-87, 106-126, 156-176, 198-218, 233-253, 263-283, 291-311, 317-337, 360-380, 398-418, and 441-461; these read WMSF…LLLS, HVAA…SVGA, LFSQ…VTLC, FVCT…VVFI, FLVG…LYGA, VVIG…VFPF, VSAY…VRVI, LVHV…LAAI, LLAY…LSMN, AAVF…LVLV, ILAL…PTVG, TLVL…LLVI, and LLSG…NQII.

Belongs to the complex I subunit 2 family. NDH-1 is composed of 14 different subunits. Subunits NuoA, H, J, K, L, M, N constitute the membrane sector of the complex.

The protein localises to the cell inner membrane. The catalysed reaction is a quinone + NADH + 5 H(+)(in) = a quinol + NAD(+) + 4 H(+)(out). NDH-1 shuttles electrons from NADH, via FMN and iron-sulfur (Fe-S) centers, to quinones in the respiratory chain. The immediate electron acceptor for the enzyme in this species is believed to be ubiquinone. Couples the redox reaction to proton translocation (for every two electrons transferred, four hydrogen ions are translocated across the cytoplasmic membrane), and thus conserves the redox energy in a proton gradient. This Syntrophobacter fumaroxidans (strain DSM 10017 / MPOB) protein is NADH-quinone oxidoreductase subunit N 2.